The primary structure comprises 1235 residues: DNA polymerase catalytic subunit (1235 aa).

2 disordered regions span residues 640–692 (QGRF…TAGR) and 1098–1134 (ATAP…ASKP). A compositionally biased stretch (basic and acidic residues) spans 650–661 (APKRPAAAREDE). Residues 662–675 (ERPEEEGEDEDERE) are compositionally biased toward acidic residues. Over residues 676–691 (EGGGEREPEGARETAG) the composition is skewed to basic and acidic residues.

This sequence belongs to the DNA polymerase type-B family. As to quaternary structure, forms a complex with the ssDNA-binding protein UL29, the DNA polymerase processivity factor, and the alkaline exonuclease. Interacts with the putative helicase-primase complex subunit UL8; this interaction may coordinate leading and lagging strand DNA synthesis at the replication fork.

Its subcellular location is the host nucleus. The enzyme catalyses DNA(n) + a 2'-deoxyribonucleoside 5'-triphosphate = DNA(n+1) + diphosphate. The catalysed reaction is Endonucleolytic cleavage to 5'-phosphomonoester.. Its function is as follows. Replicates viral genomic DNA. The replication complex is composed of six viral proteins: the DNA polymerase, processivity factor, primase, primase-associated factor, helicase, and ssDNA-binding protein. Additionally, the polymerase contains an intrinsic ribonuclease H (RNase H) activity that specifically degrades RNA/DNA heteroduplexes or duplex DNA substrates in the 5' to 3' direction. Therefore, it can catalyze the excision of the RNA primers that initiate the synthesis of Okazaki fragments at a replication fork during viral DNA replication. The polypeptide is DNA polymerase catalytic subunit (Human herpesvirus 1 (strain Angelotti) (HHV-1)).